Reading from the N-terminus, the 156-residue chain is MPRKGPVAKRDVLPDPMYNSKLVTRLINKMMVDGKKGKSQTILYNAFDIVRERSDKEPMEVFEQALKNIMPVLEVRARRVGGANYQVPVEVRPERRTTLGLRWLVNYARLRGEKTMEERLAYEILDAANNAGASVKKREDTHKMAEANKAFAHYRW.

This sequence belongs to the universal ribosomal protein uS7 family. In terms of assembly, part of the 30S ribosomal subunit. Contacts proteins S9 and S11.

Its function is as follows. One of the primary rRNA binding proteins, it binds directly to 16S rRNA where it nucleates assembly of the head domain of the 30S subunit. Is located at the subunit interface close to the decoding center, probably blocks exit of the E-site tRNA. This Bacillus cereus (strain G9842) protein is Small ribosomal subunit protein uS7.